Reading from the N-terminus, the 573-residue chain is MANRQQPTSMPIHKYRPYEQVDIADRTWPDNRVTVAPRWLSTDLRDGNQALIDPMSPARKREMFDLLVKMGYKEIEVGFPASGQTDFDFVRSIIEDETAIPDDVTISVLTQAREDLIERTVESLVGAKRATVHLYNATAPVFRRVVFRGSKDQIKQIAVDGTRLVVEYAEKLLDERTTFGYQYSPEIFTDTELDFALEVCEAVMDVWQPGPDREIILNLPATVERSTPSTHADRFEWMSRNLSRREYVCLSVHPHNDRGTAVAAAELALMAGADRIEGCLFGQGERTGNVDLVTLGMNLFSQGVDPQIDFSNIDEVRRTAEYCNQMEVHARHPYVGDLVYTSFSGSHQDAIKKGFDAMEADAAAKGVTVDDIEWAVPYLPIDPKDVGRSYEAVIRVNSQSGKGGIAYVLKNDHKLDLPRRMQIEFSKIIQTKTDAEGGEVTPKDIWAVFQDEYLPNPRNPWGRIQVKTGQTTTDKDGVDTLTVEASVDGVDTVLTGSGNGPISAFFDALQSVGIDVRLLDYTEHTMSEGASAQAASYIECAIDGQVLWGIGIDANTTRASLKAVVSAVNRAAR.

Positions 37–314 (PRWLSTDLRD…DPQIDFSNID (278 aa)) constitute a Pyruvate carboxyltransferase domain. 4 residues coordinate Mg(2+): Asp-46, His-253, His-255, and Asn-289. A regulatory domain region spans residues 456 to 573 (NPRNPWGRIQ…VVSAVNRAAR (118 aa)).

Belongs to the alpha-IPM synthase/homocitrate synthase family. LeuA type 2 subfamily. In terms of assembly, homodimer. Requires Mg(2+) as cofactor.

The protein localises to the cytoplasm. It carries out the reaction 3-methyl-2-oxobutanoate + acetyl-CoA + H2O = (2S)-2-isopropylmalate + CoA + H(+). Its pathway is amino-acid biosynthesis; L-leucine biosynthesis; L-leucine from 3-methyl-2-oxobutanoate: step 1/4. In terms of biological role, catalyzes the condensation of the acetyl group of acetyl-CoA with 3-methyl-2-oxobutanoate (2-ketoisovalerate) to form 3-carboxy-3-hydroxy-4-methylpentanoate (2-isopropylmalate). The polypeptide is 2-isopropylmalate synthase (Streptomyces avermitilis (strain ATCC 31267 / DSM 46492 / JCM 5070 / NBRC 14893 / NCIMB 12804 / NRRL 8165 / MA-4680)).